Reading from the N-terminus, the 518-residue chain is Centromere protein T (518 aa).

The interval 1 to 70 (MADLSSPDGD…RKHSHGTGSV (70 aa)) is disordered. Residues 19–28 (HVLDTADSHT) show a composition bias toward basic and acidic residues. Over residues 34–57 (STQTNPQRRRSQTPYSKRQGSQRK) the composition is skewed to polar residues. At Thr86 the chain carries Phosphothreonine. The tract at residues 94–381 (ILLTAPESST…EPHQLFEPPP (288 aa)) is flexible stalk domain. 3 disordered regions span residues 102–156 (STVM…KRKQ), 271–362 (VHHS…ELSS), and 375–412 (QLFEPPPSPGVAAVSSESVPAKLPSRTRTAQPRHHQDP). The span at 294 to 306 (TPSTGTRPQSQMS) shows a compositional bias: polar residues. Residues Ser313, Ser324, Ser333, Ser345, Ser346, Ser357, and Ser382 each carry the phosphoserine modification. Residues 326 to 343 (ELREAVGSKEAEEPKDLE) show a composition bias toward basic and acidic residues. The segment covering 384–395 (GVAAVSSESVPA) has biased composition (low complexity).

It belongs to the CENP-T/CNN1 family. As to quaternary structure, component of the CENPA-CAD complex, composed of CENPI, CENPK, CENPL, CENPO, CENPP, CENPQ, CENPR and CENPS. The CENPA-CAD complex is probably recruited on centromeres by the CENPA-NAC complex, at least composed of CENPA, CENPC, CENPH, CENPM, CENPN, CENPT and CENPU. Identified in a centromeric complex containing histones H2A, H2B, H3 and H4, and at least CENPA, CENPB, CENPC, CENPT, CENPN, HJURP, SUPT16H, SSRP1 and RSF1. Interacts (via N-terminus) with the NDC80 complex. Heterodimer with CENPW; this dimer coassembles with CENPS-CENPX heterodimers at centromeres to form the tetrameric CENP-T-W-S-X complex. In terms of processing, dynamically phosphorylated during the cell cycle. Phosphorylated during G2 phase, metaphase and anaphase, but not during telophase or G1 phase.

Its subcellular location is the nucleus. It is found in the chromosome. The protein localises to the centromere. It localises to the kinetochore. Its function is as follows. Component of the CENPA-NAC (nucleosome-associated) complex, a complex that plays a central role in assembly of kinetochore proteins, mitotic progression and chromosome segregation. The CENPA-NAC complex recruits the CENPA-CAD (nucleosome distal) complex and may be involved in incorporation of newly synthesized CENPA into centromeres. Part of a nucleosome-associated complex that binds specifically to histone H3-containing nucleosomes at the centromere, as opposed to nucleosomes containing CENPA. Component of the heterotetrameric CENP-T-W-S-X complex that binds and supercoils DNA, and plays an important role in kinetochore assembly. CENPT has a fundamental role in kinetochore assembly and function. It is one of the inner kinetochore proteins, with most further proteins binding downstream. Required for normal chromosome organization and normal progress through mitosis. This is Centromere protein T (Cenpt) from Rattus norvegicus (Rat).